A 493-amino-acid chain; its full sequence is Polyamine aminopropyltransferase 2 (493 aa).

Helical transmembrane passes span 9-29 (LCIF…ATLA), 32-52 (LLGN…LSMG), 68-88 (LAFV…VPIA), 101-121 (VIYG…PLAV), 137-157 (VLEK…YLFL), 161-181 (GLPL…FLLV), and 188-208 (KFLK…AVGH). Positions 187 to 448 (KKFLKFLAIF…PLNFENFELK (262 aa)) are spermidine synthase. The PABS domain maps to 202 to 437 (ATYAVGHKRI…GEWGMVIGSK (236 aa)). Glutamine 233 contributes to the S-methyl-5'-thioadenosine binding site. Positions 263 and 287 each coordinate spermidine. S-methyl-5'-thioadenosine-binding positions include aspartate 306 and 340–341 (DA). The active-site Proton acceptor is the aspartate 358.

The protein belongs to the spermidine/spermine synthase family. In terms of assembly, homodimer or homotetramer.

Its subcellular location is the cell membrane. It carries out the reaction S-adenosyl 3-(methylsulfanyl)propylamine + putrescine = S-methyl-5'-thioadenosine + spermidine + H(+). The protein operates within amine and polyamine biosynthesis; spermidine biosynthesis; spermidine from putrescine: step 1/1. Catalyzes the irreversible transfer of a propylamine group from the amino donor S-adenosylmethioninamine (decarboxy-AdoMet) to putrescine (1,4-diaminobutane) to yield spermidine. The polypeptide is Polyamine aminopropyltransferase 2 (Aquifex aeolicus (strain VF5)).